A 204-amino-acid polypeptide reads, in one-letter code: Large ribosomal subunit protein uL4 (204 aa).

The interval 53–74 is disordered; it reads AYVSGGGKKPWRQKGRGGARAG.

This sequence belongs to the universal ribosomal protein uL4 family. As to quaternary structure, part of the 50S ribosomal subunit.

One of the primary rRNA binding proteins, this protein initially binds near the 5'-end of the 23S rRNA. It is important during the early stages of 50S assembly. It makes multiple contacts with different domains of the 23S rRNA in the assembled 50S subunit and ribosome. In terms of biological role, forms part of the polypeptide exit tunnel. This chain is Large ribosomal subunit protein uL4, found in Campylobacter curvus (strain 525.92).